The primary structure comprises 315 residues: L-lactate dehydrogenase (315 aa).

NAD(+) contacts are provided by residues Val-16, Asp-37, and 81–82 (GA). Substrate-binding positions include Gln-84, Arg-90, and 122 to 125 (NPVD). Residues 120–122 (VSN) and Ser-145 contribute to the NAD(+) site. Substrate is bound at residue 150-153 (DTAR). Positions 155 and 170 each coordinate beta-D-fructose 1,6-bisphosphate. The active-site Proton acceptor is His-177. Tyr-224 bears the Phosphotyrosine mark. Thr-233 is a substrate binding site.

This sequence belongs to the LDH/MDH superfamily. LDH family. In terms of assembly, homotetramer.

It is found in the cytoplasm. It catalyses the reaction (S)-lactate + NAD(+) = pyruvate + NADH + H(+). Its pathway is fermentation; pyruvate fermentation to lactate; (S)-lactate from pyruvate: step 1/1. Its activity is regulated as follows. Allosterically activated by fructose 1,6-bisphosphate (FBP). In terms of biological role, catalyzes the conversion of lactate to pyruvate. The chain is L-lactate dehydrogenase from Treponema denticola (strain ATCC 35405 / DSM 14222 / CIP 103919 / JCM 8153 / KCTC 15104).